The sequence spans 687 residues: MIDQYKHQQLRIGSVSPQQISAWAKKILPNGEIVGEVTKPYTFHYKTNKPEKDGLFCERIFGPIKSGICACGNYRVIRDKKDDPKFCEQCGVEFIDSRIRRYQMGYIKLACLVTHVWYLKRLPSYIANLLDKSLKELESLVYCDFSFARPVVKKPTFLRLRGSFEYEIQSWKHSIPLFFTTQGFDIFRNREISSGAGAIREQLADLDLRILMDSSLIEWKELGEEGSPDNENEWEDRKVGRRKNFLVRRIELAKHFLRTNIEPEWMVLCLLPVLPPELRPIIQIDGGKLMSSDINELYRRVIYRNNTLIDLLTTSRSTPGELVMCQEKLVQEAVDTLLDNGIRGQPMRDGHNKVYKSFSDIIEGKEGRFRETLLGKRVDYSGRSVIVVGPSLSLHRCGLPREIAIELFQTFLIRGLIRKHFASNIGIAKSKIREKEPIVWEILQEVMQGHPVLLNRAPTLHRLGIQAFQPILVEGRAICLHPLVCKGFNADFDGDQMAVHVPLSLEAQAEARLLMFSHTNLLSPAIGDPISVPTQDMLIGLYILTSGNRRGIYSNRYNPRNCGNFRNLKNERIRDNNYKYTKKKEPFFCNSYDAIGAYQQKRINFDSPLWLRWRLDQRIISSREVPIEVHYESLGTYHEIYEHYLVVRSTKKEIRSIYIRTNVGHISFYREIEEAIQGFCRAYSYDI.

Positions 69, 71, 87, and 90 each coordinate Zn(2+). Residues Asp491, Asp493, and Asp495 each coordinate Mg(2+).

It belongs to the RNA polymerase beta' chain family. RpoC1 subfamily. In plastids the minimal PEP RNA polymerase catalytic core is composed of four subunits: alpha, beta, beta', and beta''. When a (nuclear-encoded) sigma factor is associated with the core the holoenzyme is formed, which can initiate transcription. It depends on Mg(2+) as a cofactor. Zn(2+) is required as a cofactor.

The protein resides in the plastid. It localises to the chloroplast. It carries out the reaction RNA(n) + a ribonucleoside 5'-triphosphate = RNA(n+1) + diphosphate. In terms of biological role, DNA-dependent RNA polymerase catalyzes the transcription of DNA into RNA using the four ribonucleoside triphosphates as substrates. This chain is DNA-directed RNA polymerase subunit beta', found in Glycine max (Soybean).